The chain runs to 509 residues: MTQQNAQSTSEPTISENDLIAQRHAKLKQIQDVAKETGKSPWPNTFKREHYAADLQEQFKDQSKEQIESAEHVYVKVAGRVMLNRGSFMVIQDMTGRIQLYVDRKGLPKDTLETIKGLDLGDIIAAEGYIGRSGKGDLYVHLEGFELLTKSLRPLPDKFHGLNDTEVKYRKRYLDLIVNEETRKTFEIRAKVVAGIRAFLTNERFMEVETPMMHVIPGGASARPFETHHNALDMPLFLRIAPELYLKRLVVGGFERVFEINRNFRNEGVSTRHNPEFTMIEFYQAYADYKDLMALTENMLEKLAIDILGTTDVPYQGEVFSFKGPFKKISMFDAILENNPQFTPENVGDREFLAKFVREELKEEVKPGFGLGKLQTIVFEETVETKLRQPTFITEYPAETSPLARRNDDNPHITDRFEFFIGGRELANGFSELNDPIDQAERFQAQVAEKDAGDDEAMHYDAEFVEALEYGLPPTAGEGIGIDRLVMLFADAPSIRDVILFPHMRRKEG.

Mg(2+) is bound by residues E418 and E425.

It belongs to the class-II aminoacyl-tRNA synthetase family. Homodimer. It depends on Mg(2+) as a cofactor.

Its subcellular location is the cytoplasm. It carries out the reaction tRNA(Lys) + L-lysine + ATP = L-lysyl-tRNA(Lys) + AMP + diphosphate. This Acinetobacter baumannii (strain ATCC 17978 / DSM 105126 / CIP 53.77 / LMG 1025 / NCDC KC755 / 5377) protein is Lysine--tRNA ligase.